A 563-amino-acid polypeptide reads, in one-letter code: Kdo(2)-lipid A phosphoethanolamine 7''-transferase (563 aa).

The Cytoplasmic portion of the chain corresponds to 1-9 (MRYIKSITQ). The helical transmembrane segment at 10–30 (QKLSFLLAIYIGLFMNGAVFY) threads the bilayer. Residues 31 to 48 (RRFGSYAHDFTVWKGISA) are Periplasmic-facing. A helical membrane pass occupies residues 49-69 (VVELAATVLVTFFLLRLLSLF). Residues 70–79 (GRRSWRILAS) are Cytoplasmic-facing. The helical transmembrane segment at 80–100 (LVVLFSAGASYYMTFLNVVIG) threads the bilayer. Topologically, residues 101–117 (YGIIASVMTTDIDLSKE) are periplasmic. The chain crosses the membrane as a helical span at residues 118-138 (VVGLNFILWLIAVSALPLILI). Topologically, residues 139-159 (WNNRCRYTLLRQLRTPGQRIR) are cytoplasmic. A helical membrane pass occupies residues 160–180 (SLAVVVLAGIMVWAPIRLLDI). At 181–563 (QQKKVERATG…IPQAKEAAAN (383 aa)) the chain is on the periplasmic side.

Belongs to the phosphoethanolamine transferase family. EptB subfamily. The cofactor is Ca(2+).

Its subcellular location is the cell inner membrane. It catalyses the reaction alpha-Kdo-(2-&gt;4)-alpha-Kdo-(2-&gt;6)-lipid A (E. coli) + a 1,2-diacyl-sn-glycero-3-phosphoethanolamine = 7-O-[2-aminoethoxy(hydroxy)phosphoryl]-alpha-Kdo-(2-&gt;4)-alpha-Kdo-(2-&gt;6)-lipid A + a 1,2-diacyl-sn-glycerol. The enzyme catalyses alpha-Kdo-(2-&gt;4)-alpha-Kdo-(2-&gt;6)-lipid IVA (E. coli) + a 1,2-diacyl-sn-glycero-3-phosphoethanolamine = 7-O-[2-aminoethoxy(hydroxy)phosphoryl]-alpha-Kdo-(2-&gt;4)-alpha-Kdo-(2-&gt;6)-lipid IVA (E. coli) + a 1,2-diacyl-sn-glycerol. Its activity is regulated as follows. Inhibited by calcium concentrations higher than 1 mM. Its function is as follows. Catalyzes the addition of a phosphoethanolamine (pEtN) moiety to the outer 3-deoxy-D-manno-octulosonic acid (Kdo) residue of a Kdo(2)-lipid A. Phosphatidylethanolamines with one unsaturated acyl group function as pEtN donors and the reaction releases diacylglycerol. This chain is Kdo(2)-lipid A phosphoethanolamine 7''-transferase (eptB), found in Escherichia coli (strain K12).